Consider the following 459-residue polypeptide: Bifunctional protein GlmU (459 aa).

Positions 1-229 (MLTQEIIIVI…YEEILGINNK (229 aa)) are pyrophosphorylase. Residues 11-14 (LAAG), K25, Q76, 81-82 (GT), 103-105 (YGD), G140, E154, and N227 each bind UDP-N-acetyl-alpha-D-glucosamine. Position 105 (D105) interacts with Mg(2+). N227 serves as a coordination point for Mg(2+). The tract at residues 230 to 250 (LQLSNLEKIFQKKQINKLLIN) is linker. The N-acetyltransferase stretch occupies residues 251 to 459 (GVTIKDPSHF…MRSKKIIKKN (209 aa)). Positions 333 and 351 each coordinate UDP-N-acetyl-alpha-D-glucosamine. H363 serves as the catalytic Proton acceptor. Residues Y366 and N377 each coordinate UDP-N-acetyl-alpha-D-glucosamine. Residues A380, 386–387 (NY), S405, and A423 each bind acetyl-CoA.

It in the N-terminal section; belongs to the N-acetylglucosamine-1-phosphate uridyltransferase family. This sequence in the C-terminal section; belongs to the transferase hexapeptide repeat family. As to quaternary structure, homotrimer. Mg(2+) serves as cofactor.

Its subcellular location is the cytoplasm. It catalyses the reaction alpha-D-glucosamine 1-phosphate + acetyl-CoA = N-acetyl-alpha-D-glucosamine 1-phosphate + CoA + H(+). The catalysed reaction is N-acetyl-alpha-D-glucosamine 1-phosphate + UTP + H(+) = UDP-N-acetyl-alpha-D-glucosamine + diphosphate. The protein operates within nucleotide-sugar biosynthesis; UDP-N-acetyl-alpha-D-glucosamine biosynthesis; N-acetyl-alpha-D-glucosamine 1-phosphate from alpha-D-glucosamine 6-phosphate (route II): step 2/2. Its pathway is nucleotide-sugar biosynthesis; UDP-N-acetyl-alpha-D-glucosamine biosynthesis; UDP-N-acetyl-alpha-D-glucosamine from N-acetyl-alpha-D-glucosamine 1-phosphate: step 1/1. It participates in bacterial outer membrane biogenesis; LPS lipid A biosynthesis. In terms of biological role, catalyzes the last two sequential reactions in the de novo biosynthetic pathway for UDP-N-acetylglucosamine (UDP-GlcNAc). The C-terminal domain catalyzes the transfer of acetyl group from acetyl coenzyme A to glucosamine-1-phosphate (GlcN-1-P) to produce N-acetylglucosamine-1-phosphate (GlcNAc-1-P), which is converted into UDP-GlcNAc by the transfer of uridine 5-monophosphate (from uridine 5-triphosphate), a reaction catalyzed by the N-terminal domain. This chain is Bifunctional protein GlmU, found in Buchnera aphidicola subsp. Acyrthosiphon pisum (strain 5A).